An 83-amino-acid chain; its full sequence is Cytochrome b559 subunit alpha (83 aa).

A helical transmembrane segment spans residues 21 to 35 (VIHSITIPSLFIAGW). H23 contributes to the heme binding site.

This sequence belongs to the PsbE/PsbF family. Heterodimer of an alpha subunit and a beta subunit. PSII is composed of 1 copy each of membrane proteins PsbA, PsbB, PsbC, PsbD, PsbE, PsbF, PsbH, PsbI, PsbJ, PsbK, PsbL, PsbM, PsbT, PsbX, PsbY, PsbZ, Psb30/Ycf12, at least 3 peripheral proteins of the oxygen-evolving complex and a large number of cofactors. It forms dimeric complexes. The cofactor is heme b.

Its subcellular location is the plastid. The protein resides in the chloroplast thylakoid membrane. This b-type cytochrome is tightly associated with the reaction center of photosystem II (PSII). PSII is a light-driven water:plastoquinone oxidoreductase that uses light energy to abstract electrons from H(2)O, generating O(2) and a proton gradient subsequently used for ATP formation. It consists of a core antenna complex that captures photons, and an electron transfer chain that converts photonic excitation into a charge separation. The sequence is that of Cytochrome b559 subunit alpha from Phalaenopsis aphrodite subsp. formosana (Moth orchid).